Consider the following 295-residue polypeptide: Cytidine deaminase (295 aa).

CMP/dCMP-type deaminase domains follow at residues alanine 48–alanine 168 and glutamate 187–isoleucine 295. A substrate-binding site is contributed by asparagine 89 to glutamate 91. Histidine 102 serves as a coordination point for Zn(2+). Glutamate 104 acts as the Proton donor in catalysis. Zn(2+) contacts are provided by cysteine 129 and cysteine 132.

It belongs to the cytidine and deoxycytidylate deaminase family. In terms of assembly, homodimer. Zn(2+) is required as a cofactor.

The catalysed reaction is cytidine + H2O + H(+) = uridine + NH4(+). It carries out the reaction 2'-deoxycytidine + H2O + H(+) = 2'-deoxyuridine + NH4(+). Functionally, this enzyme scavenges exogenous and endogenous cytidine and 2'-deoxycytidine for UMP synthesis. This chain is Cytidine deaminase, found in Vibrio atlanticus (strain LGP32) (Vibrio splendidus (strain Mel32)).